Reading from the N-terminus, the 450-residue chain is Eukaryotic translation initiation factor 3 subunit E (450 aa).

A PCI domain is found at 255–424 (TELFFSPAYI…GTVIMNHPPQ (170 aa)).

It belongs to the eIF-3 subunit E family. In terms of assembly, component of the eukaryotic translation initiation factor 3 (eIF-3) complex.

Its subcellular location is the cytoplasm. Component of the eukaryotic translation initiation factor 3 (eIF-3) complex, which is involved in protein synthesis of a specialized repertoire of mRNAs and, together with other initiation factors, stimulates binding of mRNA and methionyl-tRNAi to the 40S ribosome. The eIF-3 complex specifically targets and initiates translation of a subset of mRNAs involved in cell proliferation. In Aspergillus clavatus (strain ATCC 1007 / CBS 513.65 / DSM 816 / NCTC 3887 / NRRL 1 / QM 1276 / 107), this protein is Eukaryotic translation initiation factor 3 subunit E (int6).